We begin with the raw amino-acid sequence, 815 residues long: Ferripyoverdine receptor (815 aa).

Residues 1–43 (MPAPHGLSPLSKAFLMRRAFQRRILPHSLAMALSLPLAGYVQA) form the signal peptide. In terms of domain architecture, TBDR plug spans 161–271 (TPRETPQSIT…LGATINLIRK (111 aa)). A TBDR beta-barrel domain is found at 276–815 (EFKGHVELGA…NLMFSTRWDF (540 aa)). The short motif at 798-815 (SASYGDPRNLMFSTRWDF) is the TonB C-terminal box element.

The protein belongs to the TonB-dependent receptor family.

The protein resides in the cell outer membrane. Receptor for the siderophore ferripyoverdine. This is Ferripyoverdine receptor (fpvA) from Pseudomonas aeruginosa (strain ATCC 15692 / DSM 22644 / CIP 104116 / JCM 14847 / LMG 12228 / 1C / PRS 101 / PAO1).